A 358-amino-acid polypeptide reads, in one-letter code: tRNA-specific 2-thiouridylase MnmA (358 aa).

ATP contacts are provided by residues 6 to 13 (AMSGGVDS) and leucine 32. Cysteine 101 (nucleophile) is an active-site residue. Cysteine 101 and cysteine 193 are oxidised to a cystine. Position 125 (glycine 125) interacts with ATP. The interaction with tRNA stretch occupies residues 143–145 (KDQ). Residue cysteine 193 is the Cysteine persulfide intermediate of the active site.

Belongs to the MnmA/TRMU family.

It is found in the cytoplasm. The enzyme catalyses S-sulfanyl-L-cysteinyl-[protein] + uridine(34) in tRNA + AH2 + ATP = 2-thiouridine(34) in tRNA + L-cysteinyl-[protein] + A + AMP + diphosphate + H(+). Functionally, catalyzes the 2-thiolation of uridine at the wobble position (U34) of tRNA, leading to the formation of s(2)U34. The sequence is that of tRNA-specific 2-thiouridylase MnmA from Mycobacterium leprae (strain Br4923).